The chain runs to 468 residues: 3-isopropylmalate dehydratase large subunit (468 aa).

Residues C349, C409, and C412 each contribute to the [4Fe-4S] cluster site.

This sequence belongs to the aconitase/IPM isomerase family. LeuC type 1 subfamily. As to quaternary structure, heterodimer of LeuC and LeuD. [4Fe-4S] cluster serves as cofactor.

The catalysed reaction is (2R,3S)-3-isopropylmalate = (2S)-2-isopropylmalate. The protein operates within amino-acid biosynthesis; L-leucine biosynthesis; L-leucine from 3-methyl-2-oxobutanoate: step 2/4. Its function is as follows. Catalyzes the isomerization between 2-isopropylmalate and 3-isopropylmalate, via the formation of 2-isopropylmaleate. The protein is 3-isopropylmalate dehydratase large subunit of Nitrobacter hamburgensis (strain DSM 10229 / NCIMB 13809 / X14).